We begin with the raw amino-acid sequence, 568 residues long: PTS system lactose-specific EIICB component (568 aa).

A PTS EIIC type-3 domain is found at 7–409 (LIEKGKPFFE…VVDTIIYYPF (403 aa)). Transmembrane regions (helical) follow at residues 30–50 (GFIAGMPVILFSSIFILIAYV), 62–82 (IETFLMTPYSYSMGILAFFVG), 103–123 (INFLSTMLASMVGFLLMAAEP), 128–148 (GFLTAFMGTKGLLTAFIAAFV), 183–203 (FTVSVVLLYGLELLVKGTLGV), 222–242 (GYLGITLIFGAYAFFWFVGIH), 283–303 (FIATMGGTGATLIVPFLFMWI), 339–359 (IFFVPFIFAPIVNVWIFKFFV), and 389–409 (VLSFILAGLLVVVDTIIYYPF). The region spanning 466 to 568 (ETNVLVLCAG…ALAFVQQQFD (103 aa)) is the PTS EIIB type-3 domain. Cys-473 acts as the Phosphocysteine intermediate; for EIIB activity in catalysis. Cys-473 carries the phosphocysteine; by EIIA modification.

It localises to the cell membrane. The enzyme catalyses lactose(out) + N(pros)-phospho-L-histidyl-[protein] = lactose 6-phosphate(in) + L-histidyl-[protein]. Functionally, the phosphoenolpyruvate-dependent sugar phosphotransferase system (sugar PTS), a major carbohydrate active transport system, catalyzes the phosphorylation of incoming sugar substrates concomitantly with their translocation across the cell membrane. The enzyme II LacEF PTS system is involved in lactose transport. This chain is PTS system lactose-specific EIICB component, found in Lactococcus lactis subsp. lactis (Streptococcus lactis).